We begin with the raw amino-acid sequence, 327 residues long: Biotin synthase (327 aa).

A Radical SAM core domain is found at 48–278 (YCGDGVGLCM…DRHITVCGGR (231 aa)). 3 residues coordinate [4Fe-4S] cluster: Cys66, Cys70, and Cys73. 2 residues coordinate [2Fe-2S] cluster: Ser143 and Cys203.

It belongs to the radical SAM superfamily. Biotin synthase family. In terms of assembly, homodimer. [4Fe-4S] cluster serves as cofactor. Requires [2Fe-2S] cluster as cofactor.

The catalysed reaction is (4R,5S)-dethiobiotin + (sulfur carrier)-SH + 2 reduced [2Fe-2S]-[ferredoxin] + 2 S-adenosyl-L-methionine = (sulfur carrier)-H + biotin + 2 5'-deoxyadenosine + 2 L-methionine + 2 oxidized [2Fe-2S]-[ferredoxin]. It functions in the pathway cofactor biosynthesis; biotin biosynthesis; biotin from 7,8-diaminononanoate: step 2/2. In terms of biological role, catalyzes the conversion of dethiobiotin (DTB) to biotin by the insertion of a sulfur atom into dethiobiotin via a radical-based mechanism. The sequence is that of Biotin synthase from Syntrophotalea carbinolica (strain DSM 2380 / NBRC 103641 / GraBd1) (Pelobacter carbinolicus).